A 271-amino-acid chain; its full sequence is Auxin-responsive protein IAA5 (271 aa).

The disordered stretch occupies residues 1-96; that stretch reads MSPPLEPHDY…RHGASSGSVA (96 aa). 2 stretches are compositionally biased toward low complexity: residues 14 to 33 and 40 to 50; these read SAAA…SPNP and PRLTLRLGLPG. Residues 44-48 carry the EAR-like (transcriptional repression) motif; sequence LRLGL. In terms of domain architecture, PB1 spans 151–255; sequence PLYVKVSMDG…RKLKIMRGSD (105 aa).

Belongs to the Aux/IAA family. In terms of assembly, homodimers and heterodimers.

The protein localises to the nucleus. In terms of biological role, aux/IAA proteins are short-lived transcriptional factors that function as repressors of early auxin response genes at low auxin concentrations. This is Auxin-responsive protein IAA5 (IAA5) from Oryza sativa subsp. japonica (Rice).